The sequence spans 102 residues: Small ribosomal subunit protein uS10 (102 aa).

The disordered stretch occupies residues 34 to 59 (QMSGPIPLPTKRLLVPTRKSPDGEGK).

It belongs to the universal ribosomal protein uS10 family. As to quaternary structure, part of the 30S ribosomal subunit.

Involved in the binding of tRNA to the ribosomes. The polypeptide is Small ribosomal subunit protein uS10 (Methanopyrus kandleri (strain AV19 / DSM 6324 / JCM 9639 / NBRC 100938)).